Consider the following 248-residue polypeptide: MIIPALDLINSTVVRLHQGNYQQQRCYSDDPLYYLHNYLRQGAEMLHLVDLTGARDPSARQIKLLTSLLASVKGRTLVQVGGGIRNAADIEVMLQAGAHRVVIGSTAVKKPLEVQQWFKRFGPEALVLALDIRIDTNGKHWVAVSGWMENSGVLLEQVIDQYTQQVELKNILCTDISRDGTLSGMNIELYRLLCGNWPSIAFQSSGGIGSLTDIIKLRNIGVKGVIIGRALLEEKFTLAEAIACWQKE.

The active-site Proton acceptor is the Asp7. Asp131 serves as the catalytic Proton donor.

Belongs to the HisA/HisF family.

It localises to the cytoplasm. The catalysed reaction is 1-(5-phospho-beta-D-ribosyl)-5-[(5-phospho-beta-D-ribosylamino)methylideneamino]imidazole-4-carboxamide = 5-[(5-phospho-1-deoxy-D-ribulos-1-ylimino)methylamino]-1-(5-phospho-beta-D-ribosyl)imidazole-4-carboxamide. It functions in the pathway amino-acid biosynthesis; L-histidine biosynthesis; L-histidine from 5-phospho-alpha-D-ribose 1-diphosphate: step 4/9. The chain is 1-(5-phosphoribosyl)-5-[(5-phosphoribosylamino)methylideneamino] imidazole-4-carboxamide isomerase from Baumannia cicadellinicola subsp. Homalodisca coagulata.